The sequence spans 86 residues: Large ribosomal subunit protein bL27 (86 aa).

The span at 1-10 (MAQKKGGGST) shows a compositional bias: gly residues. The segment at 1 to 20 (MAQKKGGGSTRNGRDSESKR) is disordered.

It belongs to the bacterial ribosomal protein bL27 family.

The protein is Large ribosomal subunit protein bL27 of Bordetella avium (strain 197N).